Here is a 185-residue protein sequence, read N- to C-terminus: ATP synthase subunit delta (185 aa).

Belongs to the ATPase delta chain family. As to quaternary structure, F-type ATPases have 2 components, F(1) - the catalytic core - and F(0) - the membrane proton channel. F(1) has five subunits: alpha(3), beta(3), gamma(1), delta(1), epsilon(1). CF(0) has four main subunits: a(1), b(1), b'(1) and c(10-14). The alpha and beta chains form an alternating ring which encloses part of the gamma chain. F(1) is attached to F(0) by a central stalk formed by the gamma and epsilon chains, while a peripheral stalk is formed by the delta, b and b' chains.

The protein localises to the cellular thylakoid membrane. Its function is as follows. F(1)F(0) ATP synthase produces ATP from ADP in the presence of a proton or sodium gradient. F-type ATPases consist of two structural domains, F(1) containing the extramembraneous catalytic core and F(0) containing the membrane proton channel, linked together by a central stalk and a peripheral stalk. During catalysis, ATP synthesis in the catalytic domain of F(1) is coupled via a rotary mechanism of the central stalk subunits to proton translocation. Functionally, this protein is part of the stalk that links CF(0) to CF(1). It either transmits conformational changes from CF(0) to CF(1) or is implicated in proton conduction. In terms of biological role, the complex from the organism is particularly stable to disruption and remains functional after 6 hrs at 55 degrees Celsius. This Thermosynechococcus vestitus (strain NIES-2133 / IAM M-273 / BP-1) protein is ATP synthase subunit delta.